A 430-amino-acid polypeptide reads, in one-letter code: DD-carboxypeptidase/endopeptidase Mpg (430 aa).

Residues His295, Asp299, and His375 each contribute to the Zn(2+) site.

Belongs to the peptidase M23B family. As to quaternary structure, monomer. Requires Zn(2+) as cofactor. Post-translationally, likely to be synthesized as a proenzyme. The cleavage of the N-terminal domain is probably required for the activation of the enzyme.

It localises to the cell outer membrane. Its function is as follows. Has both endopeptidase and DD-carboxypeptidase activities. Degrades cell wall peptidoglycan (PG) to allow consummate expression of pili. In Neisseria meningitidis serogroup B (strain ATCC 13091 / M2091), this protein is DD-carboxypeptidase/endopeptidase Mpg.